Here is a 513-residue protein sequence, read N- to C-terminus: Palmitoyltransferase ZDHHC14 (513 aa).

At 1-59 (MHLGVEEPIRECQYNQICTHNSSPMDTPHIKKKKNKRKWQVFPGRNRFYCNGRIMMAKQ) the chain is on the cytoplasmic side. Residues 60-80 (TGVFYLTMVLILVTSGLFFAF) traverse the membrane as a helical segment. At 81 to 88 (DCPFLASN) the chain is on the lumenal side. The helical transmembrane segment at 89–109 (LTPAIPAIGGVLFVFVMGMLL) threads the bilayer. Residues 110-207 (RASFSDPGVL…GNCVGRRNYR (98 aa)) lie on the Cytoplasmic side of the membrane. The DHHC domain occupies 164–214 (KYCFTCKIFRPPRASHCSLCDNCVDRFDHHCPWVGNCVGRRNYRFFYLFIL). Catalysis depends on cysteine 194, which acts as the S-palmitoyl cysteine intermediate. The helical transmembrane segment at 208–228 (FFYLFILSLSFLTIFIFAFVI) threads the bilayer. At 229-266 (THVILNALRKALALSTAADFEAVQKDPTGLAFLVLSKT) the chain is on the lumenal side. Residues 267 to 287 (ALLDILEVVVCFFSVWSIVGL) form a helical membrane-spanning segment. Residues 288-513 (SGFHTYLISS…VRGLVKLSSV (226 aa)) lie on the Cytoplasmic side of the membrane. A disordered region spans residues 348 to 369 (FIQPDTPQPATQTNGTSACPPN). Over residues 355-369 (QPATQTNGTSACPPN) the composition is skewed to polar residues.

The protein belongs to the DHHC palmitoyltransferase family. ERF2/ZDHHC9 subfamily.

It is found in the endoplasmic reticulum membrane. It localises to the golgi apparatus membrane. It carries out the reaction L-cysteinyl-[protein] + hexadecanoyl-CoA = S-hexadecanoyl-L-cysteinyl-[protein] + CoA. Its function is as follows. Palmitoyltransferase that could catalyze the addition of palmitate onto various protein substrates. This chain is Palmitoyltransferase ZDHHC14 (zdhhc14), found in Danio rerio (Zebrafish).